The chain runs to 199 residues: Peptidyl-tRNA hydrolase (199 aa).

Tyr-18 contributes to the tRNA binding site. Residue His-23 is the Proton acceptor of the active site. TRNA is bound by residues Tyr-69, Asn-71, and Asn-117.

This sequence belongs to the PTH family. In terms of assembly, monomer.

It localises to the cytoplasm. The catalysed reaction is an N-acyl-L-alpha-aminoacyl-tRNA + H2O = an N-acyl-L-amino acid + a tRNA + H(+). In terms of biological role, hydrolyzes ribosome-free peptidyl-tRNAs (with 1 or more amino acids incorporated), which drop off the ribosome during protein synthesis, or as a result of ribosome stalling. Catalyzes the release of premature peptidyl moieties from peptidyl-tRNA molecules trapped in stalled 50S ribosomal subunits, and thus maintains levels of free tRNAs and 50S ribosomes. This is Peptidyl-tRNA hydrolase from Prochlorococcus marinus (strain MIT 9515).